A 322-amino-acid chain; its full sequence is MAALTSGLGVLGYLLFPLLLASPTWVTSVSRRHPKSQANSLSGDVACGQPVLQGKLLGGEFARDRKWPWQVSLHYSGFHICGGSILSAYWVLSAAHCFDRGKKLETYDIYVGITNLEKANRHTQWFEIYQVIIHPTFQMYHPIGGDVALVQLKSAIVFSDFVLPICLPPSDLYLINLSCWTTGWGMISPQGETGNELLEAQLPLIPRFQCQLLYGLSSYLLPEMLCAADIKTMKNVCEGDSGSPLVCKQNQTWLQIGIVSWGRGCAQPLYPGVFANVSYFLSWIRYHLQIIPNPPQILPSLSSSPKNTLIIFVTIMGHLLVL.

A signal peptide spans 1-28 (MAALTSGLGVLGYLLFPLLLASPTWVTS). Residues 29 to 55 (VSRRHPKSQANSLSGDVACGQPVLQGK) constitute a propeptide, activation peptide. One can recognise a Peptidase S1 domain in the interval 56–289 (LLGGEFARDR…FLSWIRYHLQ (234 aa)). A disulfide bond links Cys81 and Cys97. Catalysis depends on charge relay system residues His96 and Asp146. The N-linked (GlcNAc...) asparagine glycan is linked to Asn176. 3 disulfides stabilise this stretch: Cys179/Cys247, Cys210/Cys226, and Cys237/Cys265. Ser241 functions as the Charge relay system in the catalytic mechanism. N-linked (GlcNAc...) asparagine glycosylation is found at Asn250 and Asn276.

Belongs to the peptidase S1 family.

It is found in the secreted. This is Serine protease 38 (Prss38) from Mus musculus (Mouse).